Here is a 364-residue protein sequence, read N- to C-terminus: Dihydroflavonol 4-reductase (364 aa).

NADP(+) is bound by residues lysine 45 and tyrosine 164.

It belongs to the NAD(P)-dependent epimerase/dehydratase family. Dihydroflavonol-4-reductase subfamily.

It catalyses the reaction a (2R,3S,4S)-leucoanthocyanidin + NADP(+) = a (2R,3R)-dihydroflavonol + NADPH + H(+). It carries out the reaction (2S)-flavan-4-ol + NADP(+) = (2S)-flavanone + NADPH + H(+). Its pathway is pigment biosynthesis; anthocyanin biosynthesis. Its function is as follows. Bifunctional enzyme involved in flavonoid metabolism. This Callistephus chinensis (China aster) protein is Dihydroflavonol 4-reductase (F).